The primary structure comprises 131 residues: Profilin-8 (131 aa).

Cysteines 13 and 115 form a disulfide. The Involved in PIP2 interaction signature appears at 81-97; that stretch reads AVIRGKKGSGGITVKKT. Thr111 is subject to Phosphothreonine.

It belongs to the profilin family. Occurs in many kinds of cells as a complex with monomeric actin in a 1:1 ratio. In terms of processing, phosphorylated by MAP kinases.

The protein resides in the cytoplasm. The protein localises to the cytoskeleton. Its function is as follows. Binds to actin and affects the structure of the cytoskeleton. At high concentrations, profilin prevents the polymerization of actin, whereas it enhances it at low concentrations. The chain is Profilin-8 from Zea mays (Maize).